Here is a 297-residue protein sequence, read N- to C-terminus: Homoserine kinase (297 aa).

82 to 92 (PVSRGLGSSAA) serves as a coordination point for ATP.

Belongs to the GHMP kinase family. Homoserine kinase subfamily.

It localises to the cytoplasm. It carries out the reaction L-homoserine + ATP = O-phospho-L-homoserine + ADP + H(+). The protein operates within amino-acid biosynthesis; L-threonine biosynthesis; L-threonine from L-aspartate: step 4/5. Catalyzes the ATP-dependent phosphorylation of L-homoserine to L-homoserine phosphate. This is Homoserine kinase from Clostridium botulinum (strain Kyoto / Type A2).